The primary structure comprises 272 residues: MSDFEQLFAGKLPKLIMFDLDGTLVDSVPDLAVAVDTMLAELGRPTAGLESVRAWVGNGAPVLVRRALANNLDHSGVDEALAERGLDIFMRAYAEKHEFTVVYPGVRETLKWLQKMGVEMALITNKPERFVAPLLDEMKLGRFFRWIIGGDTMPQKKPDPAALFFVMKMAGVPASQSLFVGDSRSDVQAAKAAGVACVALSYGYNHGRPIAEENPAMVIDDLRRLIPGCLDLDAEILLPDIKRPSSRESIVVVTRKLWMKVIKALARWRWRA.

Residue D19 is the Nucleophile of the active site. D19, D21, and D182 together coordinate Mg(2+).

This sequence belongs to the HAD-like hydrolase superfamily. CbbY/CbbZ/Gph/YieH family. Mg(2+) is required as a cofactor.

The catalysed reaction is 2-phosphoglycolate + H2O = glycolate + phosphate. It functions in the pathway organic acid metabolism; glycolate biosynthesis; glycolate from 2-phosphoglycolate: step 1/1. Functionally, specifically catalyzes the dephosphorylation of 2-phosphoglycolate. Is involved in the dissimilation of the intracellular 2-phosphoglycolate formed during the DNA repair of 3'-phosphoglycolate ends, a major class of DNA lesions induced by oxidative stress. The polypeptide is Phosphoglycolate phosphatase (Pseudomonas syringae pv. tomato (strain ATCC BAA-871 / DC3000)).